A 337-amino-acid chain; its full sequence is 6-phosphogluconolactonase (337 aa).

This sequence belongs to the cycloisomerase 2 family.

It carries out the reaction 6-phospho-D-glucono-1,5-lactone + H2O = 6-phospho-D-gluconate + H(+). It functions in the pathway carbohydrate degradation; pentose phosphate pathway; D-ribulose 5-phosphate from D-glucose 6-phosphate (oxidative stage): step 2/3. Functionally, catalyzes the hydrolysis of 6-phosphogluconolactone to 6-phosphogluconate. The sequence is that of 6-phosphogluconolactonase from Blochmanniella pennsylvanica (strain BPEN).